We begin with the raw amino-acid sequence, 130 residues long: Small ribosomal subunit protein uS9 (130 aa).

This sequence belongs to the universal ribosomal protein uS9 family.

The sequence is that of Small ribosomal subunit protein uS9 from Aeromonas hydrophila subsp. hydrophila (strain ATCC 7966 / DSM 30187 / BCRC 13018 / CCUG 14551 / JCM 1027 / KCTC 2358 / NCIMB 9240 / NCTC 8049).